Here is a 323-residue protein sequence, read N- to C-terminus: MKPENKIPVLTRLSDEMTAVVNFQQPGLPPWPADGDIETQRQYYLLERRFWNADAPSMTTRTCAVPTPYGDVTTRLYSPQPTSQAILYYLHGGGFILGNLDTHDRIMRLLARYTGCTVIGIDYSLSPQARYPQAIEETVAVCSYFSQHADEYSLNVEKIGFAGDSAGAMLALASALWLRDKHIRCGNVIAILLWYGLYGLQDSVSRRLFGGAWDGLTREDLDMYEKAYLRNEDDRESPWYCLFNNDLTRDVPPCFIASAEFDPLIDDSRLLHQTLQAHQQPCEYKMYPGTLHAFLHYSRMMTIADDALQDGARFFMARMKTPR.

Residues 91-93 (HGG) carry the Involved in the stabilization of the negatively charged intermediate by the formation of the oxyanion hole motif. Catalysis depends on residues Ser165, Asp262, and His292.

It belongs to the 'GDXG' lipolytic enzyme family. Homodimer. Interacts with MalT and MelA.

Its subcellular location is the cytoplasm. Displays esterase activity towards short chain fatty esters (acyl chain length of up to 8 carbons). Able to hydrolyze triacetylglycerol (triacetin) and tributyrylglycerol (tributyrin), but not trioleylglycerol (triolein) or cholesterol oleate. Negatively regulates MalT activity by antagonizing maltotriose binding. Inhibits MelA galactosidase activity. This Salmonella schwarzengrund (strain CVM19633) protein is Acetyl esterase.